The following is a 29-amino-acid chain: Cycloviolacin-H2 (29 aa).

The cyclopeptide (Ser-Asn) cross-link spans 1 to 29 (SAIACGESCVYIPCFIPGCSCRNRVCYLN). Cystine bridges form between cysteine 5-cysteine 19, cysteine 9-cysteine 21, and cysteine 14-cysteine 26.

This is a cyclic peptide.

Functionally, probably participates in a plant defense mechanism. In Viola hederacea (Australian violet), this protein is Cycloviolacin-H2.